The sequence spans 577 residues: Adenine deaminase (577 aa).

The protein belongs to the metallo-dependent hydrolases superfamily. Adenine deaminase family. Mn(2+) is required as a cofactor.

It carries out the reaction adenine + H2O + H(+) = hypoxanthine + NH4(+). This chain is Adenine deaminase, found in Kosmotoga olearia (strain ATCC BAA-1733 / DSM 21960 / TBF 19.5.1).